Reading from the N-terminus, the 1097-residue chain is DNA-directed RNA polymerase subunit beta (1097 aa).

The segment at 1073 to 1097 (DINPRRNTPSRPTYESLGTSEYEED) is disordered. Over residues 1077 to 1091 (RRNTPSRPTYESLGT) the composition is skewed to polar residues.

Belongs to the RNA polymerase beta chain family. In terms of assembly, in cyanobacteria the RNAP catalytic core is composed of 2 alpha, 1 beta, 1 beta', 1 gamma and 1 omega subunit. When a sigma factor is associated with the core the holoenzyme is formed, which can initiate transcription.

It catalyses the reaction RNA(n) + a ribonucleoside 5'-triphosphate = RNA(n+1) + diphosphate. Its function is as follows. DNA-dependent RNA polymerase catalyzes the transcription of DNA into RNA using the four ribonucleoside triphosphates as substrates. In Prochlorococcus marinus (strain MIT 9312), this protein is DNA-directed RNA polymerase subunit beta.